Consider the following 314-residue polypeptide: MTAASGIGLATITADGTVLDTWFPAPELSASGPAGTARLTGDDVPADLAALTGKDEDRDVEVVAVRTTIADLNDKPADTHDVWLRLHLLSHRLTKPHEANLDGIFGLLSNVVWTNFGPCAVEGFETTRARLRKRGAVAVYGIDKFPRMVDYVTPSGVRIADADRVRLGAHLASGTTVMHEGFVNFNAGTLGTSMVEGRISAGVVVDDGSDIGGGASIMGTLSGGGKEVIKVGKRCLLGANSGLGISLGDDCVVEAGLYVTGGTKVTTADGQVTKAIELSGASNLLFRRNSLSGAVEVVKRDGTGITLNEALHAN.

2 residues coordinate Mg(2+): D163 and E180. E196 acts as the Acyl-anhydride intermediate in catalysis. Succinyl-CoA is bound by residues R198, G213, S216, A239, E254–A255, G262, K274, and R287–S290.

It belongs to the type 2 tetrahydrodipicolinate N-succinyltransferase family. Homotrimer.

It is found in the cytoplasm. It carries out the reaction (S)-2,3,4,5-tetrahydrodipicolinate + succinyl-CoA + H2O = (S)-2-succinylamino-6-oxoheptanedioate + CoA. Its pathway is amino-acid biosynthesis; L-lysine biosynthesis via DAP pathway; LL-2,6-diaminopimelate from (S)-tetrahydrodipicolinate (succinylase route): step 1/3. Functionally, catalyzes the conversion of the cyclic tetrahydrodipicolinate (THDP) into the acyclic N-succinyl-L-2-amino-6-oxopimelate using succinyl-CoA. The polypeptide is 2,3,4,5-tetrahydropyridine-2,6-dicarboxylate N-succinyltransferase (Mycolicibacterium smegmatis (strain ATCC 700084 / mc(2)155) (Mycobacterium smegmatis)).